We begin with the raw amino-acid sequence, 442 residues long: Protein IQ-DOMAIN 33 (442 aa).

In terms of domain architecture, IQ spans 159–188 (EEDAAVIIQSAFRSYLAIRRSKEEEETFAK). A disordered region spans residues 184-212 (ETFAKEESFSGEESQDNASMGTSLEAQTG). Residues 199–212 (DNASMGTSLEAQTG) are compositionally biased toward polar residues. Positions 270–282 (RERALAYAFSQQL) are calmodulin-binding. Residues 375 to 442 (EKSSFKPSIS…ETSHKLNSST (68 aa)) are disordered. Positions 383 to 402 (ISKRKSVPSYKSQRKHHKLQ) are enriched in basic residues. The Nuclear localization signal signature appears at 385–392 (KRKSVPSY).

It belongs to the IQD family. As to quaternary structure, binds to multiple calmodulin (CaM) in the presence of Ca(2+) and CaM-like proteins.

Its subcellular location is the nucleus. Its function is as follows. May be involved in cooperative interactions with calmodulins or calmodulin-like proteins. Recruits calmodulin proteins to microtubules, thus being a potential scaffold in cellular signaling and trafficking. May associate with nucleic acids and regulate gene expression at the transcriptional or post-transcriptional level. This Arabidopsis thaliana (Mouse-ear cress) protein is Protein IQ-DOMAIN 33.